The chain runs to 85 residues: CDC42 small effector protein 2 (85 aa).

Residues Cys10 and Cys11 are each lipidated (S-palmitoyl cysteine). The CRIB domain maps to 29–42; it reads IGEPTNFVHTAHVG.

The protein belongs to the CDC42SE/SPEC family.

The protein localises to the cytoplasm. The protein resides in the cytoskeleton. Its subcellular location is the cell membrane. In terms of biological role, probably involved in the organization of the actin cytoskeleton by acting downstream of CDC42, inducing actin filament assembly. The polypeptide is CDC42 small effector protein 2 (cdc42se2) (Danio rerio (Zebrafish)).